A 214-amino-acid chain; its full sequence is Putative archaetidylserine decarboxylase proenzyme (214 aa).

Catalysis depends on serine 180, which acts as the Schiff-base intermediate with substrate; via pyruvic acid. At serine 180 the chain carries Pyruvic acid (Ser); by autocatalysis.

Belongs to the phosphatidylserine decarboxylase family. PSD-A subfamily. As to quaternary structure, heterodimer of a large membrane-associated beta subunit and a small pyruvoyl-containing alpha subunit. Pyruvate serves as cofactor. Post-translationally, is synthesized initially as an inactive proenzyme. Formation of the active enzyme involves a self-maturation process in which the active site pyruvoyl group is generated from an internal serine residue via an autocatalytic post-translational modification. Two non-identical subunits are generated from the proenzyme in this reaction, and the pyruvate is formed at the N-terminus of the alpha chain, which is derived from the carboxyl end of the proenzyme. The post-translation cleavage follows an unusual pathway, termed non-hydrolytic serinolysis, in which the side chain hydroxyl group of the serine supplies its oxygen atom to form the C-terminus of the beta chain, while the remainder of the serine residue undergoes an oxidative deamination to produce ammonia and the pyruvoyl prosthetic group on the alpha chain.

The protein resides in the cell membrane. The catalysed reaction is archaetidylserine + H(+) = archaetidylethanolamine + CO2. Its function is as follows. Catalyzes the formation of archaetidylethanolamine (PtdEtn) from archaetidylserine (PtdSer). The sequence is that of Putative archaetidylserine decarboxylase proenzyme from Methanopyrus kandleri (strain AV19 / DSM 6324 / JCM 9639 / NBRC 100938).